Consider the following 483-residue polypeptide: Altronate oxidoreductase (483 aa).

18–29 (IIQFGEGNFLRA) is a binding site for NAD(+).

It belongs to the mannitol dehydrogenase family. UxaB subfamily.

The catalysed reaction is D-altronate + NAD(+) = keto-D-tagaturonate + NADH + H(+). It participates in carbohydrate metabolism; pentose and glucuronate interconversion. This Shigella flexneri serotype 5b (strain 8401) protein is Altronate oxidoreductase.